The following is a 444-amino-acid chain: Protein phosphatase 2C homolog C10F6.17c (444 aa).

The 355-residue stretch at 85–439 (RYDFNQVASN…DDITVTVIFF (355 aa)) folds into the PPM-type phosphatase domain. The Mn(2+) site is built by aspartate 121, glycine 122, and aspartate 344.

Belongs to the PP2C family. Requires Mg(2+) as cofactor. Mn(2+) is required as a cofactor.

The protein localises to the mitochondrion. It carries out the reaction O-phospho-L-seryl-[protein] + H2O = L-seryl-[protein] + phosphate. The catalysed reaction is O-phospho-L-threonyl-[protein] + H2O = L-threonyl-[protein] + phosphate. Functionally, involved in regulation of pyruvate dehydrogenase activity. This chain is Protein phosphatase 2C homolog C10F6.17c, found in Schizosaccharomyces pombe (strain 972 / ATCC 24843) (Fission yeast).